We begin with the raw amino-acid sequence, 318 residues long: Acetylglutamate kinase (318 aa).

Substrate is bound by residues 80–81 (GG), arginine 102, and asparagine 203.

This sequence belongs to the acetylglutamate kinase family. ArgB subfamily.

It is found in the cytoplasm. The enzyme catalyses N-acetyl-L-glutamate + ATP = N-acetyl-L-glutamyl 5-phosphate + ADP. Its pathway is amino-acid biosynthesis; L-arginine biosynthesis; N(2)-acetyl-L-ornithine from L-glutamate: step 2/4. Functionally, catalyzes the ATP-dependent phosphorylation of N-acetyl-L-glutamate. This is Acetylglutamate kinase from Bifidobacterium adolescentis (strain ATCC 15703 / DSM 20083 / NCTC 11814 / E194a).